A 186-amino-acid polypeptide reads, in one-letter code: Protein TRL14 (186 aa).

Asn24, Asn64, and Asn72 each carry an N-linked (GlcNAc...) asparagine; by host glycan. The helical transmembrane segment at 143–163 (HAVWAGVVVSVALIALYMGSH) threads the bilayer.

This sequence belongs to the RL11 family.

Its subcellular location is the virion membrane. In Human cytomegalovirus (strain AD169) (HHV-5), this protein is Protein TRL14.